A 276-amino-acid chain; its full sequence is Ribosomal RNA small subunit methyltransferase I (276 aa).

It belongs to the methyltransferase superfamily. RsmI family.

It localises to the cytoplasm. The enzyme catalyses cytidine(1402) in 16S rRNA + S-adenosyl-L-methionine = 2'-O-methylcytidine(1402) in 16S rRNA + S-adenosyl-L-homocysteine + H(+). Its function is as follows. Catalyzes the 2'-O-methylation of the ribose of cytidine 1402 (C1402) in 16S rRNA. The chain is Ribosomal RNA small subunit methyltransferase I from Mycoplasma pneumoniae (strain ATCC 29342 / M129 / Subtype 1) (Mycoplasmoides pneumoniae).